The sequence spans 493 residues: Cytochrome P450 710A4 (493 aa).

Residues 5–25 (VSLFASLTPYLVSALLLFLLL) traverse the membrane as a helical segment. Residue C435 participates in heme binding.

The protein belongs to the cytochrome P450 family. Heme serves as cofactor. In terms of tissue distribution, very weak expression in roots and root hairs. Not detected in the root tips.

It localises to the membrane. The catalysed reaction is 5-dehydroepisterol + NADPH + O2 + H(+) = ergosta-5,7,22,24(28)-tetraen-3beta-ol + NADP(+) + 2 H2O. It functions in the pathway steroid biosynthesis; sterol biosynthesis. Functionally, required to form the C-22 double bond in the sterol side chain. Possesses C-22 desaturase activity toward beta-sitosterol and produces stigmasterol. The protein is Cytochrome P450 710A4 of Arabidopsis thaliana (Mouse-ear cress).